Here is a 298-residue protein sequence, read N- to C-terminus: MVEIANAHNDLIHDAVLDYYGKKLATCSSDKTIKIFEVEGESHKLVDTLVGHEGPVWRVDWAHPKFGTILASCSYDGKVIIWKEENDRWSQIAVHAVHTASVNSVQWAPHEYGALLLAASSDGKVSVVEFKENGTATPLIFDAHAIGVNAASWAPATVEGGNNPGEAPKEVRRFVTGGADNLVKIWRYNPETQSYLVEDTLEGHSDWVRDVAWSPSVLLRSYIASVSQDRTCNIWTQEDNTGPWVKTQLTPEEFPDVLWRASWSLSGNILAISGGDNKVTLWKENLNGKWESAGEVNQ.

WD repeat units follow at residues Ala7–Val46, Gly51–Ile92, Val97–Pro138, Ala143–Leu196, Gly203–Val245, and Glu253–Ser292.

Belongs to the WD repeat SEC13 family. As to quaternary structure, the COPII coat is composed of at least 5 proteins: the SEC23/24 complex, the SEC13/31 complex, and the protein SAR1. Component of the nuclear pore complex (NPC). NPC constitutes the exclusive means of nucleocytoplasmic transport. NPCs allow the passive diffusion of ions and small molecules and the active, nuclear transport receptor-mediated bidirectional transport of macromolecules such as proteins, RNAs, ribonucleoparticles (RNPs), and ribosomal subunits across the nuclear envelope. Due to its 8-fold rotational symmetry, all subunits are present with 8 copies or multiples thereof.

The protein resides in the cytoplasmic vesicle. It localises to the COPII-coated vesicle membrane. It is found in the endoplasmic reticulum membrane. The protein localises to the nucleus. Its subcellular location is the nuclear pore complex. Its function is as follows. Component of the coat protein complex II (COPII) which promotes the formation of transport vesicles from the endoplasmic reticulum (ER). The coat has two main functions, the physical deformation of the endoplasmic reticulum membrane into vesicles and the selection of cargo molecules. It also functions as a component of the nuclear pore complex (NPC). NPC components, collectively referred to as nucleoporins (NUPs), can play the role of both NPC structural components and of docking or interaction partners for transiently associated nuclear transport factors. SEC13 is required for efficient mRNA export from the nucleus to the cytoplasm and for correct nuclear pore biogenesis and distribution. The sequence is that of Protein transport protein SEC13-1 (SEC131) from Candida glabrata (strain ATCC 2001 / BCRC 20586 / JCM 3761 / NBRC 0622 / NRRL Y-65 / CBS 138) (Yeast).